A 252-amino-acid chain; its full sequence is 5-oxoprolinase subunit A (252 aa).

Belongs to the LamB/PxpA family. Forms a complex composed of PxpA, PxpB and PxpC.

The enzyme catalyses 5-oxo-L-proline + ATP + 2 H2O = L-glutamate + ADP + phosphate + H(+). Functionally, catalyzes the cleavage of 5-oxoproline to form L-glutamate coupled to the hydrolysis of ATP to ADP and inorganic phosphate. The sequence is that of 5-oxoprolinase subunit A from Corynebacterium glutamicum (strain ATCC 13032 / DSM 20300 / JCM 1318 / BCRC 11384 / CCUG 27702 / LMG 3730 / NBRC 12168 / NCIMB 10025 / NRRL B-2784 / 534).